Here is an 84-residue protein sequence, read N- to C-terminus: Acid stress protein IbaG (84 aa).

Belongs to the BolA/IbaG family.

In terms of biological role, involved in cell resistance against acid stress. The sequence is that of Acid stress protein IbaG from Escherichia coli O6:H1 (strain CFT073 / ATCC 700928 / UPEC).